The primary structure comprises 233 residues: Rab-like protein 3 (233 aa).

Positions 1 to 233 (MASLDRVKVL…RFNFKSLHSD (233 aa)) are small GTPase-like. GTP is bound by residues 16-21 (GVGKSS), 148-150 (KFD), and 179-180 (DC).

This sequence belongs to the small GTPase superfamily. Rab family. Homodimer.

In terms of biological role, required for KRAS signaling regulation and modulation of cell proliferation. Regulator of KRAS prenylation, and probably prenylation of other small GTPases. Required for lymphocyte development and function. Not required for myeloid cell development. This is Rab-like protein 3 (rabl3) from Danio rerio (Zebrafish).